We begin with the raw amino-acid sequence, 816 residues long: MNGKYRGRGFGQGRFQSWKSGRGGRGFSGKWREREHRPDLNKATGKHPEQTPQSLLLQSTLDHFIPYKGWKLYFSEVYSDSIPFIEKIEAFESFFTERIELYDKDEIERKGSILVDFKELINDDEIIKLIPNIANELRDTPEKTLACMGLAIHQVLTKDLERHAAELQAQEGLSRNGETVVNVPHIHARVYNYEPLTQLKNVRANYYGKYIALRGTVVRVSNTKPLCTKMAFLCAACGEIQSLSLPDGKYNLPTKCPVPACRGKSFTALRSSPLTVTMDWQSIKIQELMSDDQREAGRIPRTIECELVHDLVDSCVPGDTVTITGVVKVSNAEEANSVSNNKGQKTKASEDGCKHGALMEFSLKDLYAIQEIQSEENLFKLIVNSLCPVIFGHELVKAGLALALFGGSQKYADDKNRIPIRGDPHVLVVGDPGLGKSQMLQAVCSVAPRGVYVCGNTTTTSGLTVTLSKDSSSGDFALEAGALVLGDQGICGIDEFDKMGNQHQALLEAMEQQSISLAKAGMVCSLPARTSIIAAANPVGGHYNKAKTVSENLKMGSALLSRFDLVFILLDTPNEDHDHLLSEHVIAIRAGKQRAVSSATVARMNSQDSNTSILEVVSDKPLSERLKVVPGETIDPIPHQLLRKYIGYSRQYVYPRLSTEAAQILQNFYLELRKQSQRLSSSPITTRQLESLIRLTEARARLELREEATKEDAEDIVEIMKYSMLGTYSDEFGNLDFERSQHGSGMSNRSAAKRFISALNKIAERTYNNLFQFHQLQQIAKELNIQVADFENFIGSLNDQGYLLKKGPKVYQLQTM.

The interval 1-52 (MNGKYRGRGFGQGRFQSWKSGRGGRGFSGKWREREHRPDLNKATGKHPEQTP) is disordered. A compositionally biased stretch (basic and acidic residues) spans 30–40 (KWREREHRPDL). An MCM domain is found at 378 to 585 (LFKLIVNSLC…DHDHLLSEHV (208 aa)). 430–437 (GDPGLGKS) provides a ligand contact to ATP. S606 is modified (phosphoserine).

It belongs to the MCM family. As to quaternary structure, component of the MCM8-MCM9 complex, which forms a hexamer composed of MCM8 and MCM9. Interacts with the DNA mismatch repair (MMR) complex composed at least of MSH2, MSH3, MSH6, PMS1 and MLH1. Interacts with RAD51; the interaction recruits RAD51 to DNA damage sites. Interacts with the MRN complex composed of MRE11, RAD50 and NBN/NBS1. Interacts with CDC6 and ORC2. Interacts with HROB; the interaction recruits the MCM8-MCM9 complex to DNA damage sites.

Its subcellular location is the nucleus. The protein localises to the chromosome. It catalyses the reaction ATP + H2O = ADP + phosphate + H(+). Component of the MCM8-MCM9 complex, a complex involved in the repair of double-stranded DNA breaks (DBSs) and DNA interstrand cross-links (ICLs) by homologous recombination (HR). Required for DNA resection by the MRE11-RAD50-NBN/NBS1 (MRN) complex by recruiting the MRN complex to the repair site and by promoting the complex nuclease activity. Probably by regulating the localization of the MNR complex, indirectly regulates the recruitment of downstream effector RAD51 to DNA damage sites including DBSs and ICLs. The MCM8-MCM9 complex is dispensable for DNA replication and S phase progression. However, may play a non-essential for DNA replication: may be involved in the activation of the prereplicative complex (pre-RC) during G(1) phase by recruiting CDC6 to the origin recognition complex (ORC). Probably by regulating HR, plays a key role during gametogenesis. Stabilizes MCM9 protein. The chain is DNA helicase MCM8 (MCM8) from Bos taurus (Bovine).